The primary structure comprises 944 residues: Translation factor GUF1 homolog, mitochondrial (944 aa).

The region spanning 201–379 (KNVRNFCILA…IITDIPYPPI (179 aa)) is the tr-type G domain. GTP contacts are provided by residues 210-217 (AHIDSGKS), 271-275 (DTPGH), and 325-328 (NKID).

The protein belongs to the TRAFAC class translation factor GTPase superfamily. Classic translation factor GTPase family. LepA subfamily.

It localises to the mitochondrion inner membrane. The catalysed reaction is GTP + H2O = GDP + phosphate + H(+). In terms of biological role, promotes mitochondrial protein synthesis. May act as a fidelity factor of the translation reaction, by catalyzing a one-codon backward translocation of tRNAs on improperly translocated ribosomes. Binds to mitochondrial ribosomes in a GTP-dependent manner. This is Translation factor GUF1 homolog, mitochondrial from Plasmodium yoelii yoelii.